Here is a 346-residue protein sequence, read N- to C-terminus: Histone PARylation factor 1 (346 aa).

Residue M1 is modified to N-acetylmethionine. 3 positions are modified to N6-acetyllysine: K19, K186, and K233. D235 is modified (polyADP-ribosyl aspartic acid). ADP-ribosyltyrosine is present on Y238. The residue at position 240 (E240) is a PolyADP-ribosyl glutamic acid. The interval 242–346 (PETDADLKRI…SEENIDQLAG (105 aa)) is interaction with PARP1. E284 serves as the catalytic Proton donor.

Belongs to the HPF1 family. In terms of assembly, interacts with PARP1 (via the PARP catalytic domain). Interacts with PARP2 (via the PARP catalytic domain). Interacts with core nucleosomes in a PARP1- and PARP2-dependent manner.

Its subcellular location is the chromosome. The protein resides in the nucleus. Its function is as follows. Cofactor for serine ADP-ribosylation that confers serine specificity on PARP1 and PARP2 and plays a key role in DNA damage response. Initiates the repair of double-strand DNA breaks: recruited to DNA damage sites by PARP1 and PARP2 and switches the amino acid specificity of PARP1 and PARP2 from aspartate or glutamate to serine residues, licensing serine ADP-ribosylation of target proteins. Serine ADP-ribosylation of target proteins, such as histones, promotes decompaction of chromatin and the recruitment of repair factors leading to the reparation of DNA strand breaks. Serine ADP-ribosylation of proteins constitutes the primary form of ADP-ribosylation of proteins in response to DNA damage. HPF1 acts by completing the active site of PARP1 and PARP2: forms a composite active site composed of residues from HPF1 and PARP1 or PARP2. While HPF1 promotes the initiation of serine ADP-ribosylation, it restricts the polymerase activity of PARP1 and PARP2 in order to limit the length of poly-ADP-ribose chains. HPF1 also promotes tyrosine ADP-ribosylation, probably by conferring tyrosine specificity on PARP1. The protein is Histone PARylation factor 1 of Mus musculus (Mouse).